The chain runs to 431 residues: Glutamate--tRNA ligase 1 (431 aa).

A 'HIGH' region motif is present at residues 6–16 (PSPTGDMHIGN). The 'KMSKS' region motif lies at 235 to 239 (KMSKR). ATP is bound at residue Lys238.

Belongs to the class-I aminoacyl-tRNA synthetase family. Glutamate--tRNA ligase type 1 subfamily. Monomer.

Its subcellular location is the cytoplasm. The catalysed reaction is tRNA(Glu) + L-glutamate + ATP = L-glutamyl-tRNA(Glu) + AMP + diphosphate. Its function is as follows. Catalyzes the attachment of glutamate to tRNA(Glu) in a two-step reaction: glutamate is first activated by ATP to form Glu-AMP and then transferred to the acceptor end of tRNA(Glu). This chain is Glutamate--tRNA ligase 1, found in Campylobacter curvus (strain 525.92).